We begin with the raw amino-acid sequence, 1971 residues long: Germinal-center associated nuclear protein (1971 aa).

2 disordered regions span residues 1–50 (MHPV…KSLA) and 214–406 (PAFA…RGKS). A compositionally biased stretch (polar residues) spans 8–29 (GGQQPSAFAVSSSTTGTYQTKS). Arginine 32 is modified (asymmetric dimethylarginine). Residues 33–335 (FGQPSLFGQN…RPRGGTLFGR (303 aa)) form an FG-repeats region. 2 stretches are compositionally biased toward polar residues: residues 38–50 (LFGQNSTPSKSLA) and 214–224 (PAFASPLSNQN). Low complexity predominate over residues 232–253 (STSAFGSSNSSFSTFPTASPGS). Basic and acidic residues-rich tracts occupy residues 288–321 (RKEDQDRSPRRHCHEAAEDPDPLSRGDHPPDKRP) and 342–359 (KSNKEAGRLGSKESKESG). The DNA primase stretch occupies residues 414–550 (EEWIYSLGGV…AAGSLLSKSS (137 aa)). Serine 424 is modified (phosphoserine). An N6-acetyllysine mark is found at lysine 483 and lysine 484. 3 positions are modified to phosphoserine: serine 502, serine 531, and serine 550. The region spanning 768 to 951 (NNENMTKCLQ…RKSVFIGRKL (184 aa)) is the PCI domain. Residues 1124–1162 (HVAAEEVSMERQRLEEEKQRAEEERLKQERELMLTQLSE) adopt a coiled-coil conformation. The interval 1793–1840 (RELQLSHGRSGMRSIHPPTSTFPTPLLHVHQKGKKKEESGREGSLSTE) is disordered.

The protein belongs to the SAC3 family. Component of the nuclear pore complex (NPC)-associated TREX-2 complex (transcription and export complex 2), composed of at least GANP, 2 copies of ENY2, PCID2, SEM1/DSS1, and either centrin CETN2 or centrin CETN3. The TREX-2 complex also associates with ALYREF/ALY. Interacts with RNA polymerase II subunit POLR2A and with the transcription elongation factor SUPT5H/SPT5. Interacts (via FG-repeats) with NXF1; this interaction is not mediated by RNA. Interacts with nuclear envelope proteins NUP62, NUP153 and RANBP2/NUP358; interaction with NUP153 is required for full localization at the nuclear pore complex. Interacts with several RNA helicases, including DHX9, DDX21, and DDX39A/DDX39, and with DNA topoisomerase TOP2A. Directly interacts with AICDA/AID. Interacts with the glucocorticoid receptor NR3C1. Interacts with MCM3. In terms of processing, phosphorylation at Ser-502 is induced in B-cells by CD40-stimulation, but not by bacterial lipopolysaccharide (LPS). Expressed at low levels in lymphoid organs, including thymus, spleen and lymph nodes. Up-regulated in stimulated B-cells in spleen and Peyer's patch germinal centers (at protein level).

The protein resides in the cytoplasm. The protein localises to the nucleus. It is found in the nucleus envelope. It localises to the nuclear pore complex. Its subcellular location is the nucleoplasm. The protein resides in the chromosome. The catalysed reaction is L-lysyl-[histone] + acetyl-CoA = N(6)-acetyl-L-lysyl-[histone] + CoA + H(+). As a component of the TREX-2 complex, involved in the export of mRNAs to the cytoplasm through the nuclear pores. Through the acetylation of histones, affects the assembly of nucleosomes at immunoglobulin variable region genes and promotes the recruitment and positioning of transcription complex to favor DNA cytosine deaminase AICDA/AID targeting, hence promoting somatic hypermutations. The polypeptide is Germinal-center associated nuclear protein (Mcm3ap) (Mus musculus (Mouse)).